We begin with the raw amino-acid sequence, 191 residues long: Fe/S biogenesis protein NfuA (191 aa).

Positions 149 and 152 each coordinate [4Fe-4S] cluster.

The protein belongs to the NfuA family. As to quaternary structure, homodimer. The cofactor is [4Fe-4S] cluster.

In terms of biological role, involved in iron-sulfur cluster biogenesis. Binds a 4Fe-4S cluster, can transfer this cluster to apoproteins, and thereby intervenes in the maturation of Fe/S proteins. Could also act as a scaffold/chaperone for damaged Fe/S proteins. The sequence is that of Fe/S biogenesis protein NfuA from Escherichia coli O7:K1 (strain IAI39 / ExPEC).